The primary structure comprises 698 residues: MGDPGLSKLQFAPFNSALDVGFWHELTQKKLNEYRLDEAPKDIKGYYYNGDSAGLPTRLTLEFSAFDMSAPTPARCCPAMGTLHNTNTLEAFKTADKKLLLEQSANEIWEAIKSGAALENPMLLNKFLLLTFADLKKYHFYYWFCCPALCLPESIPLIRGPVGLDQRLSPKQIQALEHAYDDLCRTEGVTALPYFLFKYDDDTVLVSLLKHYSDFFQGQRTKLTVGVYDPCNLTQHPGWPLRNFLVLAAHRWSGSFQSVEVLCFRDRTMQGARDVTHSIIFEVKLPEMAFSPDCPKAVGWEKNQKGGMGPRMVNLSGCMDPKRLAESSVDLNLKLMCWRLVPTLDLDKVVSVKCLLLGAGTLGCNVARTLMGWGVRHVTFVDNAKISYSNPVRQPLYEFEDCLGGGKPKALAAAERLQKIFPGVNASGFNMSIPMPGHPVNFSDVTMEQARRDVEQLEELIDSHDVIFLLMDTRESRWLPTVIAASKRKLVINAALGFDTFVVMRHGLKKPKQQGAGDLCPSHLVAPADLGSSLFANIPGYKLGCYFCNDVVAPGDSTRDRTLDQQCTVSRPGLAVIAGALAVELMVSVLQHPEGGYAIASSSDDRMNEPPTSLGLVPHQIRGFLSRFDNVLPVSLAFDKCTACSSKVLDQYEQEGFTFLAKVFNSSHSFLEDLTGLTLLHQETQAAEIWDMSDEETV.

The short motif at 11–13 (FAP) is the FAP motif element. Residue Lys-41 forms a Glycyl lysine isopeptide (Lys-Gly) (interchain with G-Cter in ubiquitin) linkage. Cys-567 (glycyl thioester intermediate) is an active-site residue. Ser-693 carries the post-translational modification Phosphoserine.

This sequence belongs to the ATG7 family. In terms of assembly, homodimer. Interacts with ATG3; this interaction is essential for the transfer of ATG8-like proteins's thioester from ATG7 to ATG3 and plays a role in the conjugation of ATG12 to ATG5. Interacts with ATG12. Forms intermediate conjugates with GABARAPL1. Forms intermediate conjugates with ATG8-like proteins such as GABARAP, GABARAPL2 or MAP1LC3A. Interacts with EP300 acetyltransferase. Interacts with FOXO1. Post-translationally, acetylated by EP300. Polyubiquitinated on Lys-41 via 'Lys-63'-linked ubiquitin by TRIM32; this modification positiely regulates ATG8 and ATG12 activating enzyme activity leading to initiation of autophagy under metabolic stress. Widely expressed.

The protein resides in the cytoplasm. It is found in the preautophagosomal structure. Its function is as follows. E1-like activating enzyme involved in the 2 ubiquitin-like systems required for cytoplasm to vacuole transport (Cvt) and autophagy. Activates ATG12 for its conjugation with ATG5 as well as the ATG8 family proteins for their conjugation with phosphatidylethanolamine. Both systems are needed for the ATG8 association to Cvt vesicles and autophagosomes membranes. Required for autophagic death induced by caspase-8 inhibition. Facilitates LC3-I lipidation with phosphatidylethanolamine to form LC3-II which is found on autophagosomal membranes. Required for mitophagy which contributes to regulate mitochondrial quantity and quality by eliminating the mitochondria to a basal level to fulfill cellular energy requirements and preventing excess ROS production. Modulates p53/TP53 activity to regulate cell cycle and survival during metabolic stress. Also plays a key role in the maintenance of axonal homeostasis, the prevention of axonal degeneration, the maintenance of hematopoietic stem cells, the formation of Paneth cell granules, as well as in adipose differentiation. Plays a role in regulating the liver clock and glucose metabolism by mediating the autophagic degradation of CRY1 (clock repressor) in a time-dependent manner. This is Ubiquitin-like modifier-activating enzyme ATG7 from Rattus norvegicus (Rat).